The sequence spans 914 residues: Valine--tRNA ligase (914 aa).

A 'HIGH' region motif is present at residues 47–57 (PYPTGELHMGH). The short motif at 552 to 556 (KMSKS) is the 'KMSKS' region element. Lys555 lines the ATP pocket.

Belongs to the class-I aminoacyl-tRNA synthetase family. ValS type 2 subfamily.

The protein localises to the cytoplasm. The catalysed reaction is tRNA(Val) + L-valine + ATP = L-valyl-tRNA(Val) + AMP + diphosphate. Its function is as follows. Catalyzes the attachment of valine to tRNA(Val). As ValRS can inadvertently accommodate and process structurally similar amino acids such as threonine, to avoid such errors, it has a 'posttransfer' editing activity that hydrolyzes mischarged Thr-tRNA(Val) in a tRNA-dependent manner. The polypeptide is Valine--tRNA ligase (Methanopyrus kandleri (strain AV19 / DSM 6324 / JCM 9639 / NBRC 100938)).